The sequence spans 237 residues: 1-(5-phosphoribosyl)-5-[(5-phosphoribosylamino)methylideneamino] imidazole-4-carboxamide isomerase (237 aa).

The Proton acceptor role is filled by Asp8. Asp128 serves as the catalytic Proton donor.

Belongs to the HisA/HisF family.

The protein localises to the cytoplasm. The catalysed reaction is 1-(5-phospho-beta-D-ribosyl)-5-[(5-phospho-beta-D-ribosylamino)methylideneamino]imidazole-4-carboxamide = 5-[(5-phospho-1-deoxy-D-ribulos-1-ylimino)methylamino]-1-(5-phospho-beta-D-ribosyl)imidazole-4-carboxamide. It participates in amino-acid biosynthesis; L-histidine biosynthesis; L-histidine from 5-phospho-alpha-D-ribose 1-diphosphate: step 4/9. The protein is 1-(5-phosphoribosyl)-5-[(5-phosphoribosylamino)methylideneamino] imidazole-4-carboxamide isomerase of Gemmatimonas aurantiaca (strain DSM 14586 / JCM 11422 / NBRC 100505 / T-27).